The primary structure comprises 387 residues: Patatin-13 (387 aa).

The signal sequence occupies residues 1-23 (MATTKSVLVLIFMILATTSSTFA). The PNPLA domain occupies 32-230 (LSVDGGGIKG…TVADPALLSV (199 aa)). Residues 36–41 (GGGIKG) carry the GXGXXG motif. The GXSXG signature appears at 75–79 (GTSTG). Catalysis depends on Ser77, which acts as the Nucleophile. 2 N-linked (GlcNAc...) asparagine glycosylation sites follow: Asn115 and Asn203. The active-site Proton acceptor is the Asp216. The short motif at 216–218 (DGA) is the DGA/G element. Residues 361–385 (ETYEEALKRFAKLLSDRKKLRANKA) adopt a coiled-coil conformation.

It belongs to the patatin family. Tuber.

Its subcellular location is the vacuole. Probable lipolytic acyl hydrolase (LAH), an activity which is thought to be involved in the response of tubers to pathogens. The protein is Patatin-13 of Solanum tuberosum (Potato).